The chain runs to 373 residues: MEGLESVYAQAMYGMTRESKIMEHQGSDLIWGGNELMARELCSSSSYHHQLINPNLSSCFMSDLGVLGEIQQQQHVGNRASSIDPSSLDCLLSATSNSNNTSTEDDEGISVLFSDCQTLWSFGGVSSAESENREITTETTTTIKPKPLKRNRGGDGGTTETTTTTTKPKSLKRNRGDETGSHFSLVHPQDDSEKGGFKLIYDENQSKSKKPRTEKERGGSSNISFQHSTCLSDNVEPDAEAIAQMKEMIYRAAAFRPVNFGLEIVEKPKRKNVKISTDPQTVAARQRRERISEKIRVLQTLVPGGTKMDTASMLDEAANYLKFLRAQVKALENLRPKLDQTNLSFSSAPTSFPLFHPSFLPLQNPNQIHHPEC.

A disordered region spans residues serine 127–histidine 227. The span at proline 188–glycine 218 shows a compositional bias: basic and acidic residues. The bHLH domain maps to isoleucine 275–leucine 324.

As to quaternary structure, homodimer. As to expression, flowers.

Its subcellular location is the nucleus. The sequence is that of Transcription factor bHLH87 (BHLH87) from Arabidopsis thaliana (Mouse-ear cress).